The chain runs to 142 residues: HTH-type transcriptional regulator MntR (142 aa).

In terms of domain architecture, HTH dtxR-type spans 1–63; the sequence is MPTPSMEDYI…YEKYRGLVLT (63 aa). Residues aspartate 8, glutamate 11, histidine 77, glutamate 99, glutamate 102, and histidine 103 each coordinate Mn(2+).

It belongs to the DtxR/MntR family. In terms of assembly, homodimer.

Its subcellular location is the cytoplasm. With respect to regulation, DNA binding is strongly activated by Mn(2+). Functionally, central regulator of manganese homeostasis. In Bacillus mycoides (strain KBAB4) (Bacillus weihenstephanensis), this protein is HTH-type transcriptional regulator MntR.